The following is a 148-amino-acid chain: Nucleoside diphosphate kinase (148 aa).

Positions 9, 57, 85, 91, 102, and 112 each coordinate ATP. Position 91 is a phosphothreonine (threonine 91). Histidine 115 serves as the catalytic Pros-phosphohistidine intermediate. At serine 122 the chain carries Phosphoserine.

It belongs to the NDK family. In terms of assembly, homotetramer. It depends on Mg(2+) as a cofactor.

The protein resides in the cytoplasm. The enzyme catalyses a 2'-deoxyribonucleoside 5'-diphosphate + ATP = a 2'-deoxyribonucleoside 5'-triphosphate + ADP. The catalysed reaction is a ribonucleoside 5'-diphosphate + ATP = a ribonucleoside 5'-triphosphate + ADP. In terms of biological role, major role in the synthesis of nucleoside triphosphates other than ATP. The ATP gamma phosphate is transferred to the NDP beta phosphate via a ping-pong mechanism, using a phosphorylated active-site intermediate. This chain is Nucleoside diphosphate kinase, found in Bacillus anthracis.